The sequence spans 362 residues: Outer envelope protein 39, chloroplastic (362 aa).

The protein belongs to the OEP80 (TC 1.B.33.2) family. In terms of tissue distribution, expressed in germinating seeds. Expressed in the vasculature of roots, cotyledons and leaves.

It localises to the plastid. The protein resides in the chloroplast outer membrane. Functionally, beta-barrel pore-forming protein which possesses voltage-dependent channel activity. Required for proper plastid development. Involved in the maintenance of metabolic homeostasis of full-grown plants. The chain is Outer envelope protein 39, chloroplastic from Arabidopsis thaliana (Mouse-ear cress).